The following is a 672-amino-acid chain: Segment polarity protein dishevelled homolog mig-5 (672 aa).

Residues 9-91 form the DIX domain; that stretch reads CSQIKVFYYL…GFYEIFLVST (83 aa). 3 disordered regions span residues 97-127, 150-174, and 187-215; these read LPRN…ATPY, YTSN…SSLY, and DDDR…ATES. Polar residues predominate over residues 98 to 108; that stretch reads PRNSGTMTRPQ. Over residues 160–169 the composition is skewed to basic and acidic residues; sequence YDEHTRRTGD. Basic residues predominate over residues 191-202; the sequence is RRKKQKKERFRR. Positions 226 to 294 constitute a PDZ domain; the sequence is EIYLPMKNVP…PQAVRSLREA (69 aa). Residues 427–501 form the DEP domain; that stretch reads PDSGLAVKNR…TEKCYYVFGD (75 aa). The interval 604–672 is disordered; that stretch reads KNNHRQVPAP…SNSRTRILRT (69 aa). The segment covering 660 to 672 has biased composition (polar residues); that stretch reads ENSSNSRTRILRT.

The protein belongs to the DSH family.

It is found in the cytoplasm. The protein resides in the cell cortex. The protein localises to the cell membrane. It localises to the cell junction. Its function is as follows. Plays a role in the signal transduction pathways mediated by multiple Wnt genes. Functions redundantly with other dishevelled family members throughout development. During embryonic and larval development, controls cell migration and/or cell fate specification of hypodermal cells, hypodermal seam cells, vulval precursor cells and, through distal tip cell migration, somatic gonad precursor cells. In early embryos, regulates the orientation of the mitotic spindle of blastomeres and specifically, along with dsh-2, is required for the correct mitotic spindle orientation of the ABar blastomere division plane. Controls the polarity and the asymmetric localization of downstream components of the wnt/beta-catenin asymmetry pathway, and in particular, controls the asymmetric localization of the wnt receptor lin-17/Frizzled in ectodermal blast B cells. May act redundantly with dsh-2 to regulate the expression and nuclear localization of the beta-catenin homolog wrm-2, but alone seems to be required for the polarity of wrm-2 during the asymmetric cell division of hypodermal seam cells. Also, maintains the polarity and migration of QL neuroblasts in larvae. During the embryonic development of touch receptor neurons, may act redundantly with dsh-1, downstream of wnt signaling ligands and the wnt receptor lin-17/Frizzled, to direct the growth of neurites of touch receptor neurons towards the anterior of the body of the worm and towards the PLM touch receptor neuron and other tail neurons. May play a role in the guidance of posterior D-type motor neuron axons along the anteroposterior axis. In Caenorhabditis elegans, this protein is Segment polarity protein dishevelled homolog mig-5.